Here is a 346-residue protein sequence, read N- to C-terminus: GTPase Obg (346 aa).

Residues 1–159 (MRFVDRCRLK…RELRLELKVL (159 aa)) enclose the Obg domain. A disordered region spans residues 122–147 (KGGRGNLHFKSPHDRAPRRAEPGEPG). Basic and acidic residues predominate over residues 132–147 (SPHDRAPRRAEPGEPG). Positions 160-336 (ADVGLLGFPN…LVRELAALAR (177 aa)) constitute an OBG-type G domain. Residues 166–173 (GFPNAGKS), 191–195 (FTTLT), 218–221 (DIPG), 288–291 (TKAD), and 317–319 (SAA) contribute to the GTP site. The Mg(2+) site is built by Ser173 and Thr193.

Belongs to the TRAFAC class OBG-HflX-like GTPase superfamily. OBG GTPase family. As to quaternary structure, monomer. It depends on Mg(2+) as a cofactor.

It is found in the cytoplasm. An essential GTPase which binds GTP, GDP and possibly (p)ppGpp with moderate affinity, with high nucleotide exchange rates and a fairly low GTP hydrolysis rate. Plays a role in control of the cell cycle, stress response, ribosome biogenesis and in those bacteria that undergo differentiation, in morphogenesis control. This Sorangium cellulosum (strain So ce56) (Polyangium cellulosum (strain So ce56)) protein is GTPase Obg.